Here is a 750-residue protein sequence, read N- to C-terminus: Glutathione biosynthesis bifunctional protein GshAB (750 aa).

Positions 1–333 (MIIDRLLQRS…EANRLNDLIA (333 aa)) are glutamate--cysteine ligase. The disordered stretch occupies residues 32-51 (QPTQRVAQTPHPKTLGSRNY). The 259-residue stretch at 489-747 (KKILDEKHFP…ITPRILAKLF (259 aa)) folds into the ATP-grasp domain. An ATP-binding site is contributed by 516–574 (SQIQDKPIVVKPKSTNFGLGISIFKTSANLASYEKAIDIAFTEDSAILVEEYIEGTEYR). Residues Asp696, Glu717, and Asn719 each coordinate Mg(2+). Mn(2+)-binding residues include Asp696, Glu717, and Asn719.

In the N-terminal section; belongs to the glutamate--cysteine ligase type 1 family. Type 2 subfamily. In terms of assembly, monomer. Mg(2+) serves as cofactor. The cofactor is Mn(2+).

It carries out the reaction L-cysteine + L-glutamate + ATP = gamma-L-glutamyl-L-cysteine + ADP + phosphate + H(+). The catalysed reaction is gamma-L-glutamyl-L-cysteine + glycine + ATP = glutathione + ADP + phosphate + H(+). The protein operates within sulfur metabolism; glutathione biosynthesis; glutathione from L-cysteine and L-glutamate: step 1/2. It participates in sulfur metabolism; glutathione biosynthesis; glutathione from L-cysteine and L-glutamate: step 2/2. Functionally, synthesizes glutathione from L-glutamate and L-cysteine via gamma-L-glutamyl-L-cysteine. The polypeptide is Glutathione biosynthesis bifunctional protein GshAB (Streptococcus agalactiae serotype III (strain NEM316)).